We begin with the raw amino-acid sequence, 274 residues long: 2,3,4,5-tetrahydropyridine-2,6-dicarboxylate N-succinyltransferase (274 aa).

2 residues coordinate substrate: arginine 106 and aspartate 143.

It belongs to the transferase hexapeptide repeat family. In terms of assembly, homotrimer.

The protein resides in the cytoplasm. The enzyme catalyses (S)-2,3,4,5-tetrahydrodipicolinate + succinyl-CoA + H2O = (S)-2-succinylamino-6-oxoheptanedioate + CoA. The protein operates within amino-acid biosynthesis; L-lysine biosynthesis via DAP pathway; LL-2,6-diaminopimelate from (S)-tetrahydrodipicolinate (succinylase route): step 1/3. This is 2,3,4,5-tetrahydropyridine-2,6-dicarboxylate N-succinyltransferase from Acidovorax sp. (strain JS42).